Here is a 463-residue protein sequence, read N- to C-terminus: Asparagine--tRNA ligase (463 aa).

This sequence belongs to the class-II aminoacyl-tRNA synthetase family. As to quaternary structure, homodimer.

It localises to the cytoplasm. The catalysed reaction is tRNA(Asn) + L-asparagine + ATP = L-asparaginyl-tRNA(Asn) + AMP + diphosphate + H(+). The protein is Asparagine--tRNA ligase of Bacillus cereus (strain ATCC 10987 / NRS 248).